The primary structure comprises 452 residues: Cysteine--tRNA ligase (452 aa).

C35 is a Zn(2+) binding site. Residues P37–N47 carry the 'HIGH' region motif. Positions 215, 240, and 244 each coordinate Zn(2+). Residues K273–S277 carry the 'KMSKS' region motif. Residue K276 coordinates ATP.

Belongs to the class-I aminoacyl-tRNA synthetase family. As to quaternary structure, monomer. Zn(2+) is required as a cofactor.

Its subcellular location is the cytoplasm. It carries out the reaction tRNA(Cys) + L-cysteine + ATP = L-cysteinyl-tRNA(Cys) + AMP + diphosphate. The polypeptide is Cysteine--tRNA ligase (Gluconobacter oxydans (strain 621H) (Gluconobacter suboxydans)).